The chain runs to 182 residues: NADH-quinone oxidoreductase subunit I (182 aa).

4Fe-4S ferredoxin-type domains are found at residues 52–82 (LTRDPDGEERCVACNLCAVACPVGCISLQKA) and 92–121 (DFFRINFSRCIFCGLCEEACPTTAIQLTPD). [4Fe-4S] cluster contacts are provided by cysteine 62, cysteine 65, cysteine 68, cysteine 72, cysteine 101, cysteine 104, cysteine 107, and cysteine 111.

Belongs to the complex I 23 kDa subunit family. In terms of assembly, NDH-1 is composed of 13 different subunits. Subunits NuoA, H, J, K, L, M, N constitute the membrane sector of the complex. [4Fe-4S] cluster is required as a cofactor.

Its subcellular location is the cell inner membrane. It catalyses the reaction a quinone + NADH + 5 H(+)(in) = a quinol + NAD(+) + 4 H(+)(out). Its function is as follows. NDH-1 shuttles electrons from NADH, via FMN and iron-sulfur (Fe-S) centers, to quinones in the respiratory chain. The immediate electron acceptor for the enzyme in this species is believed to be ubiquinone. Couples the redox reaction to proton translocation (for every two electrons transferred, four hydrogen ions are translocated across the cytoplasmic membrane), and thus conserves the redox energy in a proton gradient. This chain is NADH-quinone oxidoreductase subunit I, found in Pseudomonas syringae pv. tomato (strain ATCC BAA-871 / DC3000).